A 399-amino-acid chain; its full sequence is Elongation factor Tu (399 aa).

The 200-residue stretch at 10–209 (KPHVNIGTIG…AVDSYIPTPK (200 aa)) folds into the tr-type G domain. The G1 stretch occupies residues 19 to 26 (GHVDHGKT). Position 19–26 (19–26 (GHVDHGKT)) interacts with GTP. T26 serves as a coordination point for Mg(2+). The interval 60–64 (GITIA) is G2. Residues 81–84 (DCPG) form a G3 region. GTP-binding positions include 81–85 (DCPGH) and 136–139 (NKTD). The segment at 136–139 (NKTD) is G4. The interval 174-176 (SAL) is G5.

This sequence belongs to the TRAFAC class translation factor GTPase superfamily. Classic translation factor GTPase family. EF-Tu/EF-1A subfamily. Monomer.

It localises to the cytoplasm. The catalysed reaction is GTP + H2O = GDP + phosphate + H(+). Functionally, GTP hydrolase that promotes the GTP-dependent binding of aminoacyl-tRNA to the A-site of ribosomes during protein biosynthesis. The polypeptide is Elongation factor Tu (Campylobacter hominis (strain ATCC BAA-381 / DSM 21671 / CCUG 45161 / LMG 19568 / NCTC 13146 / CH001A)).